The following is a 158-amino-acid chain: Transcription factor bHLH146 (158 aa).

The span at 77-90 (SSSSNPTTTTSSSS) shows a compositional bias: low complexity. The segment at 77-110 (SSSSNPTTTTSSSSDGIRILERPDKEGGNEEGGI) is disordered. A compositionally biased stretch (basic and acidic residues) spans 94-110 (RILERPDKEGGNEEGGI). One can recognise a bHLH; atypical domain in the interval 94–143 (RILERPDKEGGNEEGGIEERLRELKKLLPGGEEMNVEEMLSEIGNYIKCL).

The protein belongs to the bHLH protein family.

It localises to the nucleus. The chain is Transcription factor bHLH146 (BHLH146) from Arabidopsis thaliana (Mouse-ear cress).